The following is a 141-amino-acid chain: Hemoglobin subunit alpha (141 aa).

The Globin domain occupies 1–141 (VLSPADKTNV…VSTVLTSKYR (141 aa)). A Phosphoserine modification is found at Ser3. Lys7 is subject to N6-succinyllysine. Position 8 is a phosphothreonine (Thr8). N6-succinyllysine is present on Lys11. Lys16 bears the N6-acetyllysine; alternate mark. The residue at position 16 (Lys16) is an N6-succinyllysine; alternate. Phosphotyrosine is present on Tyr24. Ser35 carries the phosphoserine modification. Residue Lys40 is modified to N6-succinyllysine. Ser49 is subject to Phosphoserine. His58 is an O2 binding site. Heme b is bound at residue His87. At Ser102 the chain carries Phosphoserine. A Phosphothreonine modification is found at Thr108. Ser124 and Ser131 each carry phosphoserine. Phosphothreonine is present on residues Thr134 and Thr137. A Phosphoserine modification is found at Ser138.

Belongs to the globin family. Heterotetramer of two alpha chains and two beta chains. In terms of tissue distribution, red blood cells.

Involved in oxygen transport from the lung to the various peripheral tissues. In terms of biological role, hemopressin acts as an antagonist peptide of the cannabinoid receptor CNR1. Hemopressin-binding efficiently blocks cannabinoid receptor CNR1 and subsequent signaling. The polypeptide is Hemoglobin subunit alpha (HBA) (Urocitellus parryii (Arctic ground squirrel)).